The sequence spans 343 residues: D-beta-hydroxybutyrate dehydrogenase, mitochondrial (343 aa).

The N-terminal 46 residues, 1–46 (MLAARLSRPLSQLPGKALSVRDRENGTRHTLLFYPASFSPDTRRTY), are a transit peptide targeting the mitochondrion. 60 to 84 (ITGCDSGFGFSLAKHLHSKGFLVFA) contacts NAD(+). Residues K73 and K97 each carry the N6-acetyllysine modification. At K103 the chain carries N6-acetyllysine; alternate. At K103 the chain carries N6-succinyllysine; alternate. N6-acetyllysine is present on residues K132 and K177. M196 contributes to the substrate binding site. Catalysis depends on C209, which acts as the Proton acceptor. N6-acetyllysine is present on K212. An O-linked (GlcNAc) serine glycan is attached at S219. Residue S246 is modified to Phosphoserine. N6-acetyllysine is present on K258. At K259 the chain carries N6-acetyllysine; alternate. The residue at position 259 (K259) is an N6-succinyllysine; alternate. K280 carries the post-translational modification N6-acetyllysine.

It belongs to the short-chain dehydrogenases/reductases (SDR) family. In terms of assembly, homotetramer. Acetylation of Lys-132 is observed in liver mitochondria from fasted mice but not from fed mice.

Its subcellular location is the mitochondrion inner membrane. It is found in the mitochondrion matrix. The catalysed reaction is (R)-3-hydroxybutanoate + NAD(+) = acetoacetate + NADH + H(+). Its activity is regulated as follows. Requires phosphatidylcholine as an allosteric activator for enzymatic activity. This is D-beta-hydroxybutyrate dehydrogenase, mitochondrial from Mus musculus (Mouse).